The chain runs to 100 residues: Small ribosomal subunit protein uS14 (100 aa).

Belongs to the universal ribosomal protein uS14 family. In terms of assembly, part of the 30S ribosomal subunit. Contacts proteins S3 and S10.

Its function is as follows. Binds 16S rRNA, required for the assembly of 30S particles and may also be responsible for determining the conformation of the 16S rRNA at the A site. The sequence is that of Small ribosomal subunit protein uS14 from Thermosynechococcus vestitus (strain NIES-2133 / IAM M-273 / BP-1).